The following is a 381-amino-acid chain: Dual-specificity RNA methyltransferase RlmN (381 aa).

The active-site Proton acceptor is the glutamate 96. Residues 102-342 (TDDRGTLCVS…TRTTRGDDID (241 aa)) enclose the Radical SAM core domain. Cysteine 109 and cysteine 345 are oxidised to a cystine. The [4Fe-4S] cluster site is built by cysteine 116, cysteine 120, and cysteine 123. S-adenosyl-L-methionine is bound by residues 170 to 171 (GE), serine 202, 224 to 226 (SLH), and asparagine 302. Cysteine 345 (S-methylcysteine intermediate) is an active-site residue.

The protein belongs to the radical SAM superfamily. RlmN family. [4Fe-4S] cluster is required as a cofactor.

It localises to the cytoplasm. The catalysed reaction is adenosine(2503) in 23S rRNA + 2 reduced [2Fe-2S]-[ferredoxin] + 2 S-adenosyl-L-methionine = 2-methyladenosine(2503) in 23S rRNA + 5'-deoxyadenosine + L-methionine + 2 oxidized [2Fe-2S]-[ferredoxin] + S-adenosyl-L-homocysteine. The enzyme catalyses adenosine(37) in tRNA + 2 reduced [2Fe-2S]-[ferredoxin] + 2 S-adenosyl-L-methionine = 2-methyladenosine(37) in tRNA + 5'-deoxyadenosine + L-methionine + 2 oxidized [2Fe-2S]-[ferredoxin] + S-adenosyl-L-homocysteine. Specifically methylates position 2 of adenine 2503 in 23S rRNA and position 2 of adenine 37 in tRNAs. m2A2503 modification seems to play a crucial role in the proofreading step occurring at the peptidyl transferase center and thus would serve to optimize ribosomal fidelity. The polypeptide is Dual-specificity RNA methyltransferase RlmN (Pseudomonas putida (strain ATCC 700007 / DSM 6899 / JCM 31910 / BCRC 17059 / LMG 24140 / F1)).